A 381-amino-acid chain; its full sequence is Beta-1,4-galactosyltransferase 5 (381 aa).

Over 1 to 11 (MPTHLRFRRRS) the chain is Cytoplasmic. The helical; Signal-anchor for type II membrane protein transmembrane segment at 12–32 (FLGLLFLFSLSTSALYFIYSA) threads the bilayer. Residues 33 to 381 (PGIVNEYLFM…SRDLAPVADY (349 aa)) are Lumenal-facing. 3 N-linked (GlcNAc...) asparagine glycosylation sites follow: Asn-73, Asn-82, and Asn-120. A disulfide bond links Cys-106 and Cys-151. UDP-alpha-D-galactose contacts are provided by residues 162–166 (PFRNR), 201–203 (FNR), 228–229 (VD), Tyr-257, and Trp-289. A disulfide bond links Cys-222 and Cys-241. Position 229 (Asp-229) interacts with Mn(2+). 291–294 (GEDD) is an N-acetyl-D-glucosamine binding site. Residue His-322 coordinates Mn(2+). 322-323 (HH) is a binding site for UDP-alpha-D-galactose. Position 333 (Arg-333) interacts with N-acetyl-D-glucosamine. The N-linked (GlcNAc...) asparagine glycan is linked to Asn-366.

Belongs to the glycosyltransferase 7 family. Requires Mn(2+) as cofactor.

It localises to the golgi apparatus. The protein localises to the golgi stack membrane. It carries out the reaction a beta-D-glucosyl-(1&lt;-&gt;1')-N-acylsphing-4-enine + UDP-alpha-D-galactose = a beta-D-Gal-(1-&gt;4)-beta-D-Glc-(1&lt;-&gt;1)-Cer(d18:1(4E)) + UDP + H(+). The protein operates within protein modification; protein glycosylation. It participates in sphingolipid metabolism. Functionally, catalyzes the synthesis of lactosylceramide (LacCer) via the transfer of galactose from UDP-galactose to glucosylceramide (GlcCer). Required for proper patterning of the dorsoventral axis during embryogenesis through the regulation of BMP signaling. Plays a role in proteoglycan glycosylation that is required for BMP-dependent specification of the dorsoventral axis. The protein is Beta-1,4-galactosyltransferase 5 (b4galt5) of Danio rerio (Zebrafish).